Consider the following 304-residue polypeptide: Glutaminase (304 aa).

The substrate site is built by Ser-63, Asn-114, Glu-158, Asn-165, Tyr-189, Tyr-240, and Val-258.

This sequence belongs to the glutaminase family. Homotetramer.

It carries out the reaction L-glutamine + H2O = L-glutamate + NH4(+). This chain is Glutaminase, found in Shewanella oneidensis (strain ATCC 700550 / JCM 31522 / CIP 106686 / LMG 19005 / NCIMB 14063 / MR-1).